A 52-amino-acid polypeptide reads, in one-letter code: UPF0057 membrane protein PA0567 (52 aa).

The next 2 helical transmembrane spans lie at Ile-6–Ala-26 and Leu-29–Ile-49.

The protein belongs to the UPF0057 (PMP3) family.

It localises to the cell membrane. This Pseudomonas aeruginosa (strain ATCC 15692 / DSM 22644 / CIP 104116 / JCM 14847 / LMG 12228 / 1C / PRS 101 / PAO1) protein is UPF0057 membrane protein PA0567.